The sequence spans 366 residues: Beta sliding clamp (366 aa).

The protein belongs to the beta sliding clamp family. As to quaternary structure, forms a ring-shaped head-to-tail homodimer around DNA which binds and tethers DNA polymerases and other proteins to the DNA. The DNA replisome complex has a single clamp-loading complex (3 tau and 1 each of delta, delta', psi and chi subunits) which binds 3 Pol III cores (1 core on the leading strand and 2 on the lagging strand) each with a beta sliding clamp dimer. Additional proteins in the replisome are other copies of gamma, psi and chi, Ssb, DNA helicase and RNA primase.

Its subcellular location is the cytoplasm. In terms of biological role, confers DNA tethering and processivity to DNA polymerases and other proteins. Acts as a clamp, forming a ring around DNA (a reaction catalyzed by the clamp-loading complex) which diffuses in an ATP-independent manner freely and bidirectionally along dsDNA. Initially characterized for its ability to contact the catalytic subunit of DNA polymerase III (Pol III), a complex, multichain enzyme responsible for most of the replicative synthesis in bacteria; Pol III exhibits 3'-5' exonuclease proofreading activity. The beta chain is required for initiation of replication as well as for processivity of DNA replication. This is Beta sliding clamp (dnaN) from Chlamydia pneumoniae (Chlamydophila pneumoniae).